The primary structure comprises 230 residues: Alpha-S1-casein (230 aa).

A signal peptide spans 1 to 15; the sequence is MKLLILTCLVAVALA. A phosphoserine mark is found at S33, S83, S85, S86, S87, and S88. The segment covering 60–83 has biased composition (basic and acidic residues); sequence DELKDTRNEPTEDHIMEDTERKES. Disordered regions lie at residues 60 to 103 and 211 to 230; these read DELK…DILK and TPEG…PQWW. Over residues 84-96 the composition is skewed to low complexity; sequence GSSSSEEVVSSTT.

The protein belongs to the alpha-casein family. Mammary gland specific. Secreted in milk.

Its subcellular location is the secreted. Important role in the capacity of milk to transport calcium phosphate. The polypeptide is Alpha-S1-casein (CSN1S1) (Camelus dromedarius (Dromedary)).